Reading from the N-terminus, the 370-residue chain is MSFDLTDHSHARYNPLTDSWILVSPHRAKRPWLGQQEKPGRNDAPDHDDKCYLCPGTTRATGEQNPDYESTYVFTNGYPAVKLEQPDPELTVSNCDALKERLFKLKGVKGNCYVICFSPKHNLSFPQMAQSEIMNVVKTWTNLFQTLEKEALEENKPYKYLQIFENKGTAMGCSNLHPHGQAWCLDSIPSEPAKEFDHFEKYEHQHGAHLLEDYVNLELREKERIVCENDSFLVVVPYWAVWPFETMVLSKRRIPSLNQFTDKEREDLASIIRNLTIRYDNLFETSFPYSMGLHQASLNATEGELKAAWFHMHFYPPLLRSATVRKFLVGFELLGQPQRDLTAEQAADRLKALSGEVHYLAKLEQEESKT.

The Zn(2+) site is built by cysteine 51 and cysteine 54. Residues alanine 60 and 76–77 (NG) each bind UDP-alpha-D-glucose. Histidine 121 is a binding site for Zn(2+). Asparagine 166 contacts UDP-alpha-D-glucose. Position 177 (histidine 177) interacts with Zn(2+). Catalysis depends on histidine 179, which acts as the Tele-UMP-histidine intermediate. Glutamine 181 is a UDP-alpha-D-glucose binding site. Residues glutamate 195, histidine 294, histidine 311, and histidine 313 each contribute to the Fe cation site. UDP-alpha-D-glucose is bound by residues 326–329 (KFLV) and 331–332 (FE).

It belongs to the galactose-1-phosphate uridylyltransferase type 1 family. In terms of assembly, homodimer. The cofactor is Zn(2+).

The enzyme catalyses alpha-D-galactose 1-phosphate + UDP-alpha-D-glucose = alpha-D-glucose 1-phosphate + UDP-alpha-D-galactose. It functions in the pathway carbohydrate metabolism; galactose metabolism. The polypeptide is Galactose-1-phosphate uridylyltransferase (GAL7) (Kluyveromyces lactis (strain ATCC 8585 / CBS 2359 / DSM 70799 / NBRC 1267 / NRRL Y-1140 / WM37) (Yeast)).